The sequence spans 108 residues: uncharacterized protein (108 aa).

The protein belongs to the UPF0440 family.

This is an uncharacterized protein from Thermococcus kodakarensis (strain ATCC BAA-918 / JCM 12380 / KOD1) (Pyrococcus kodakaraensis (strain KOD1)).